The primary structure comprises 342 residues: Cellular tumor antigen p53 (342 aa).

Residues 1-35 (MEEADLTLPLSQDTFHDLWNNVFLSTENESLAPPE) form a transcription activation (acidic) region. The DNA-binding element occupies 68–255 (NYAGEHGFNL…KTEEGNLEKS (188 aa)). Zn(2+)-binding residues include C142, H145, C201, and C205. Positions 236-243 (RVCACPGR) are interaction with DNA. The segment covering 244 to 256 (DRKTEEGNLEKSG) has biased composition (basic and acidic residues). The interval 244 to 287 (DRKTEEGNLEKSGTKQTKKRKSAPAPDTSTAKKSKSASSGEDED) is disordered. Residues 261–278 (KKRKSAPAPDTSTAKKSK) carry the Bipartite nuclear localization signal motif. Positions 271–282 (TSTAKKSKSASS) are enriched in low complexity. The interval 288–317 (KEIYTLSIRGRNRYLWFKSLNDGLELMDKT) is oligomerization. Positions 302-313 (LWFKSLNDGLEL) match the Nuclear export signal motif. The segment at 318–342 (GPKIKQEIPAPSSGKRLLKGGSDSD) is disordered. A basic (repression of DNA-binding) region spans residues 319–336 (PKIKQEIPAPSSGKRLLK).

The protein belongs to the p53 family. As to quaternary structure, binds DNA as a homotetramer. It depends on Zn(2+) as a cofactor.

The protein resides in the cytoplasm. Its subcellular location is the nucleus. Multifunctional transcription factor that induces cell cycle arrest, DNA repair or apoptosis upon binding to its target DNA sequence. Acts as a tumor suppressor in many tumor types; induces growth arrest or apoptosis depending on the physiological circumstances and cell type. Negatively regulates cell division by controlling expression of a set of genes required for this process. One of the activated genes is an inhibitor of cyclin-dependent kinases. Apoptosis induction seems to be mediated either by stimulation of BAX and FAS antigen expression, or by repression of Bcl-2 expression. The chain is Cellular tumor antigen p53 (tp53) from Xiphophorus hellerii (Green swordtail).